The following is a 462-amino-acid chain: L-seryl-tRNA(Sec) selenium transferase (462 aa).

Residue lysine 293 is modified to N6-(pyridoxal phosphate)lysine.

It belongs to the SelA family. The cofactor is pyridoxal 5'-phosphate.

The protein localises to the cytoplasm. It catalyses the reaction L-seryl-tRNA(Sec) + selenophosphate + H(+) = L-selenocysteinyl-tRNA(Sec) + phosphate. Its pathway is aminoacyl-tRNA biosynthesis; selenocysteinyl-tRNA(Sec) biosynthesis; selenocysteinyl-tRNA(Sec) from L-seryl-tRNA(Sec) (bacterial route): step 1/1. Converts seryl-tRNA(Sec) to selenocysteinyl-tRNA(Sec) required for selenoprotein biosynthesis. The sequence is that of L-seryl-tRNA(Sec) selenium transferase from Clostridium botulinum (strain 657 / Type Ba4).